Consider the following 345-residue polypeptide: 3-dehydroquinate synthase (345 aa).

Residues 62-67, 96-100, 120-121, Lys-133, Lys-142, and 160-163 contribute to the NAD(+) site; these read DGEEYK, GVISD, TT, and FLKT. Glu-175, His-233, and His-250 together coordinate Zn(2+).

This sequence belongs to the sugar phosphate cyclases superfamily. Dehydroquinate synthase family. Co(2+) serves as cofactor. It depends on Zn(2+) as a cofactor. Requires NAD(+) as cofactor.

It is found in the cytoplasm. It catalyses the reaction 7-phospho-2-dehydro-3-deoxy-D-arabino-heptonate = 3-dehydroquinate + phosphate. Its pathway is metabolic intermediate biosynthesis; chorismate biosynthesis; chorismate from D-erythrose 4-phosphate and phosphoenolpyruvate: step 2/7. In terms of biological role, catalyzes the conversion of 3-deoxy-D-arabino-heptulosonate 7-phosphate (DAHP) to dehydroquinate (DHQ). In Campylobacter concisus (strain 13826), this protein is 3-dehydroquinate synthase.